The following is a 264-amino-acid chain: Ribosomal RNA small subunit methyltransferase A (264 aa).

The S-adenosyl-L-methionine site is built by asparagine 12, leucine 14, glycine 40, glutamate 61, aspartate 86, and asparagine 105.

The protein belongs to the class I-like SAM-binding methyltransferase superfamily. rRNA adenine N(6)-methyltransferase family. RsmA subfamily.

It is found in the cytoplasm. It catalyses the reaction adenosine(1518)/adenosine(1519) in 16S rRNA + 4 S-adenosyl-L-methionine = N(6)-dimethyladenosine(1518)/N(6)-dimethyladenosine(1519) in 16S rRNA + 4 S-adenosyl-L-homocysteine + 4 H(+). Specifically dimethylates two adjacent adenosines (A1518 and A1519) in the loop of a conserved hairpin near the 3'-end of 16S rRNA in the 30S particle. May play a critical role in biogenesis of 30S subunits. The sequence is that of Ribosomal RNA small subunit methyltransferase A from Fusobacterium nucleatum subsp. nucleatum (strain ATCC 25586 / DSM 15643 / BCRC 10681 / CIP 101130 / JCM 8532 / KCTC 2640 / LMG 13131 / VPI 4355).